A 271-amino-acid polypeptide reads, in one-letter code: Serine protease SP24D (271 aa).

Positions 1 to 22 are cleaved as a signal peptide; that stretch reads MTLADRVPLALAALAYLALVSG. The propeptide at 23–49 is activation peptide; that stretch reads VRFHLSEQNDVLPGGSQARRPFFQGAR. In terms of domain architecture, Peptidase S1 spans 50–269; that stretch reads IVGGSVASEG…FVTWIQTTMR (220 aa). Residues C75 and C91 are joined by a disulfide bond. Catalysis depends on charge relay system residues H90 and D136. 2 disulfide bridges follow: C199–C211 and C221–C246. The Charge relay system role is filled by S225.

It belongs to the peptidase S1 family. In terms of tissue distribution, highest level of adult expression is in the thorax.

The polypeptide is Serine protease SP24D (Sp24D) (Anopheles gambiae (African malaria mosquito)).